The chain runs to 200 residues: ATP-dependent Clp protease proteolytic subunit (200 aa).

Ser98 acts as the Nucleophile in catalysis. His123 is a catalytic residue.

It belongs to the peptidase S14 family. Fourteen ClpP subunits assemble into 2 heptameric rings which stack back to back to give a disk-like structure with a central cavity, resembling the structure of eukaryotic proteasomes.

It is found in the cytoplasm. It carries out the reaction Hydrolysis of proteins to small peptides in the presence of ATP and magnesium. alpha-casein is the usual test substrate. In the absence of ATP, only oligopeptides shorter than five residues are hydrolyzed (such as succinyl-Leu-Tyr-|-NHMec, and Leu-Tyr-Leu-|-Tyr-Trp, in which cleavage of the -Tyr-|-Leu- and -Tyr-|-Trp bonds also occurs).. Cleaves peptides in various proteins in a process that requires ATP hydrolysis. Has a chymotrypsin-like activity. Plays a major role in the degradation of misfolded proteins. In Deinococcus geothermalis (strain DSM 11300 / CIP 105573 / AG-3a), this protein is ATP-dependent Clp protease proteolytic subunit.